Here is a 315-residue protein sequence, read N- to C-terminus: MRKRARIIYNPTSGKEQFKRELPDALIKLEKAGYETSAYATEKIGDATLEAERAMHENYDVLIAAGGDGTLNEVVNGIAEKPNRPKLGVIPMGTVNDFGRALHIPNDIMGALDVIIEGHSTKVDIGKMNNRYFINLAAGGQLTQVSYETPSKLKSIVGPFAYYIKGFEMLPQMKAVDLRIEYDGNVFQGEALLFFLGLTNSMAGFEKLVPDAKLDDGYFTLIIVEKSNLAELGHIMTLASRGEHTKHPKVIYEKAKAINISSLTDLQLNVDGEYGGKLPANFLNLERHIDVFAPNDIVNEELISNDHVDDNLIEE.

In terms of domain architecture, DAGKc spans 1 to 132 (MRKRARIIYN…VDIGKMNNRY (132 aa)). ATP contacts are provided by residues 10 to 14 (NPTSG), Thr41, 67 to 73 (GDGTLNE), and Thr94. Positions 213, 216, and 218 each coordinate Mg(2+). Glu273 functions as the Proton acceptor in the catalytic mechanism.

It belongs to the diacylglycerol/lipid kinase family. As to quaternary structure, homodimer. Requires Mg(2+) as cofactor.

It carries out the reaction a 1,2-diacyl-sn-glycerol + ATP = a 1,2-diacyl-sn-glycero-3-phosphate + ADP + H(+). Functionally, catalyzes the phosphorylation of diacylglycerol (DAG) into phosphatidic acid. Is a key enzyme involved in the production of lipoteichoic acid by reintroducing DAG formed from the breakdown of membrane phospholipids into the phosphatidylglycerol biosynthetic pathway. The sequence is that of Diacylglycerol kinase (dagK) from Staphylococcus aureus (strain bovine RF122 / ET3-1).